We begin with the raw amino-acid sequence, 142 residues long: MVLSAADKTNVKAAWSKVGGNAGEFGAEALERMFLGFPTTKTYFPHFDLSHGSAQVKAHGKKVGDALTLAVGHLDDLPGALSNLSDLHAHKLRVDPVNFKLLSHCLLSTLAVHLPNDFTPAVHASLDKFLSTVSTVLTSKYR.

The Globin domain occupies 2 to 142; the sequence is VLSAADKTNV…VSTVLTSKYR (141 aa). Ser4 is modified (phosphoserine). Position 8 is an N6-succinyllysine (Lys8). Thr9 bears the Phosphothreonine mark. Residue Lys12 is modified to N6-succinyllysine. Lys17 is subject to N6-acetyllysine; alternate. An N6-succinyllysine; alternate modification is found at Lys17. The residue at position 41 (Lys41) is an N6-succinyllysine. At Ser50 the chain carries Phosphoserine. His59 is an O2 binding site. His88 lines the heme b pocket. At Ser103 the chain carries Phosphoserine. Position 109 is a phosphothreonine (Thr109). A Phosphoserine modification is found at Ser125. A phosphothreonine mark is found at Thr135 and Thr138. Ser139 is subject to Phosphoserine.

Belongs to the globin family. In terms of assembly, heterotetramer of two alpha chains and two beta chains. Red blood cells.

Involved in oxygen transport from the lung to the various peripheral tissues. Functionally, hemopressin acts as an antagonist peptide of the cannabinoid receptor CNR1. Hemopressin-binding efficiently blocks cannabinoid receptor CNR1 and subsequent signaling. In Equus zebra (Mountain zebra), this protein is Hemoglobin subunit alpha (HBA).